We begin with the raw amino-acid sequence, 208 residues long: Large ribosomal subunit protein uL3 (208 aa).

Glutamine 149 bears the N5-methylglutamine mark.

This sequence belongs to the universal ribosomal protein uL3 family. As to quaternary structure, part of the 50S ribosomal subunit. Forms a cluster with proteins L14 and L19. In terms of processing, methylated by PrmB.

In terms of biological role, one of the primary rRNA binding proteins, it binds directly near the 3'-end of the 23S rRNA, where it nucleates assembly of the 50S subunit. The polypeptide is Large ribosomal subunit protein uL3 (Haemophilus ducreyi (strain 35000HP / ATCC 700724)).